A 269-amino-acid chain; its full sequence is Tryptophan synthase alpha chain (269 aa).

Residues glutamate 49 and aspartate 60 each act as proton acceptor in the active site.

Belongs to the TrpA family. Tetramer of two alpha and two beta chains.

It catalyses the reaction (1S,2R)-1-C-(indol-3-yl)glycerol 3-phosphate + L-serine = D-glyceraldehyde 3-phosphate + L-tryptophan + H2O. The protein operates within amino-acid biosynthesis; L-tryptophan biosynthesis; L-tryptophan from chorismate: step 5/5. Functionally, the alpha subunit is responsible for the aldol cleavage of indoleglycerol phosphate to indole and glyceraldehyde 3-phosphate. The sequence is that of Tryptophan synthase alpha chain from Pseudomonas syringae pv. syringae.